We begin with the raw amino-acid sequence, 584 residues long: Arginine--tRNA ligase (584 aa).

Residues 126–136 (PNIAKEMHVGH) carry the 'HIGH' region motif.

Belongs to the class-I aminoacyl-tRNA synthetase family. As to quaternary structure, monomer.

It localises to the cytoplasm. The enzyme catalyses tRNA(Arg) + L-arginine + ATP = L-arginyl-tRNA(Arg) + AMP + diphosphate. The sequence is that of Arginine--tRNA ligase (argS) from Synechocystis sp. (strain ATCC 27184 / PCC 6803 / Kazusa).